Reading from the N-terminus, the 348-residue chain is Isopentenyl-diphosphate delta-isomerase (348 aa).

9–10 (RK) contacts substrate. FMN-binding positions include 68-70 (AMT), Ser98, and Asn127. Substrate is bound at residue Gln157. Glu158 is a binding site for Mg(2+). FMN-binding positions include Lys188, Ser213, Thr218, and 286-287 (AG).

Belongs to the IPP isomerase type 2 family. In terms of assembly, homooctamer. Dimer of tetramers. It depends on FMN as a cofactor. NADPH serves as cofactor. Mg(2+) is required as a cofactor.

The protein resides in the cytoplasm. It carries out the reaction isopentenyl diphosphate = dimethylallyl diphosphate. In terms of biological role, involved in the biosynthesis of isoprenoids. Catalyzes the 1,3-allylic rearrangement of the homoallylic substrate isopentenyl (IPP) to its allylic isomer, dimethylallyl diphosphate (DMAPP). This is Isopentenyl-diphosphate delta-isomerase from Limosilactobacillus reuteri (strain DSM 20016) (Lactobacillus reuteri).